Reading from the N-terminus, the 545-residue chain is MTTRYIFVTGGVVSSLGKGIAAASLAAILEARGLNVTIMKLDPYINLDPGTMSPTQHGEVFVTEDGAETDLDLGHYERFIRTKMNRRNNFTTGRIYSEVLRKERRGDYLGATIQVIPHITNAIKEKVLDGGEGHDVAIVEIGGTVGDIESLPFLESIRQLGVELGRERTLFMHLTLVPFLGAAGEVKTKPTQHSVKELRSIGIAPDVLVCRGDRAIPANEKAKISLFCNVEERAVISLKDVDSIYKIPALLKAQGLDELVTKRFGIECKEADLHEWEQVIYQEANPTGDVTIGMVGKYIELPDAYKSVNEALKHAGLFNRVSVNIKYIDSQTVEAKGEEVLEGLDGILVPGGFGERGVEGKIFAAKYARENNLPYFGICLGMQVALIEFARHVAGLEGAHSTEFQKETPHPVVGLITEWLNEDGNVEQRHETSDLGGTMRLGAQLCHLEEGTKAAAAYQANTCVERHRHRYEVNNNYKDRLEKAGLVFSGLSSDRQLVEMIELPNHPWFVAGQFHPEFTSTPRDGQPLFVGFVAAAAAHQKRDLG.

Positions 1 to 266 (MTTRYIFVTG…DELVTKRFGI (266 aa)) are amidoligase domain. Ser-14 serves as a coordination point for CTP. Ser-14 is a binding site for UTP. Residues 15–20 (SLGKGI) and Asp-72 contribute to the ATP site. Residues Asp-72 and Glu-140 each coordinate Mg(2+). CTP is bound by residues 147–149 (DIE), 187–192 (KTKPTQ), and Lys-223. UTP is bound by residues 187–192 (KTKPTQ) and Lys-223. ATP is bound at residue 239-241 (KDV). The Glutamine amidotransferase type-1 domain occupies 291-542 (TIGMVGKYIE…VAAAAAHQKR (252 aa)). Gly-352 is a binding site for L-glutamine. Residue Cys-379 is the Nucleophile; for glutamine hydrolysis of the active site. L-glutamine-binding positions include 380–383 (LGMQ), Glu-403, and Arg-470. Catalysis depends on residues His-515 and Glu-517.

Belongs to the CTP synthase family. In terms of assembly, homotetramer.

It carries out the reaction UTP + L-glutamine + ATP + H2O = CTP + L-glutamate + ADP + phosphate + 2 H(+). The catalysed reaction is L-glutamine + H2O = L-glutamate + NH4(+). It catalyses the reaction UTP + NH4(+) + ATP = CTP + ADP + phosphate + 2 H(+). Its pathway is pyrimidine metabolism; CTP biosynthesis via de novo pathway; CTP from UDP: step 2/2. Allosterically activated by GTP, when glutamine is the substrate; GTP has no effect on the reaction when ammonia is the substrate. The allosteric effector GTP functions by stabilizing the protein conformation that binds the tetrahedral intermediate(s) formed during glutamine hydrolysis. Inhibited by the product CTP, via allosteric rather than competitive inhibition. Functionally, catalyzes the ATP-dependent amination of UTP to CTP with either L-glutamine or ammonia as the source of nitrogen. Regulates intracellular CTP levels through interactions with the four ribonucleotide triphosphates. This Shewanella woodyi (strain ATCC 51908 / MS32) protein is CTP synthase.